Here is a 180-residue protein sequence, read N- to C-terminus: ATP synthase subunit delta (180 aa).

Belongs to the ATPase delta chain family. In terms of assembly, F-type ATPases have 2 components, F(1) - the catalytic core - and F(0) - the membrane proton channel. F(1) has five subunits: alpha(3), beta(3), gamma(1), delta(1), epsilon(1). F(0) has three main subunits: a(1), b(2) and c(10-14). The alpha and beta chains form an alternating ring which encloses part of the gamma chain. F(1) is attached to F(0) by a central stalk formed by the gamma and epsilon chains, while a peripheral stalk is formed by the delta and b chains.

The protein localises to the cell membrane. F(1)F(0) ATP synthase produces ATP from ADP in the presence of a proton or sodium gradient. F-type ATPases consist of two structural domains, F(1) containing the extramembraneous catalytic core and F(0) containing the membrane proton channel, linked together by a central stalk and a peripheral stalk. During catalysis, ATP synthesis in the catalytic domain of F(1) is coupled via a rotary mechanism of the central stalk subunits to proton translocation. Functionally, this protein is part of the stalk that links CF(0) to CF(1). It either transmits conformational changes from CF(0) to CF(1) or is implicated in proton conduction. The polypeptide is ATP synthase subunit delta (Lactobacillus delbrueckii subsp. bulgaricus (strain ATCC BAA-365 / Lb-18)).